The following is a 127-amino-acid chain: Glycine cleavage system H protein (127 aa).

The Lipoyl-binding domain maps to 24–106 (VVTVGVTFHA…YGAGWFFKLK (83 aa)). The residue at position 65 (Lys-65) is an N6-lipoyllysine.

Belongs to the GcvH family. The glycine cleavage system is composed of four proteins: P, T, L and H. (R)-lipoate is required as a cofactor.

In terms of biological role, the glycine cleavage system catalyzes the degradation of glycine. The H protein shuttles the methylamine group of glycine from the P protein to the T protein. This Laribacter hongkongensis (strain HLHK9) protein is Glycine cleavage system H protein.